The primary structure comprises 789 residues: Endonuclease MutS2 (789 aa).

334-341 (GPNTGGKT) is a binding site for ATP. The segment at 690–714 (PEKDIQQSGTGKIMKSKTGDTKSEV) is disordered. The Smr domain maps to 714–789 (VDVRGKNLEE…GMGVTIVELK (76 aa)).

It belongs to the DNA mismatch repair MutS family. MutS2 subfamily. In terms of assembly, homodimer. Binds to stalled ribosomes, contacting rRNA.

Functionally, endonuclease that is involved in the suppression of homologous recombination and thus may have a key role in the control of bacterial genetic diversity. In terms of biological role, acts as a ribosome collision sensor, splitting the ribosome into its 2 subunits. Detects stalled/collided 70S ribosomes which it binds and splits by an ATP-hydrolysis driven conformational change. Acts upstream of the ribosome quality control system (RQC), a ribosome-associated complex that mediates the extraction of incompletely synthesized nascent chains from stalled ribosomes and their subsequent degradation. Probably generates substrates for RQC. The chain is Endonuclease MutS2 from Alkaliphilus metalliredigens (strain QYMF).